The primary structure comprises 366 residues: Zinc transporter ZIP13 (366 aa).

Topologically, residues 1–5 (MTKQK) are lumenal. The helical transmembrane segment at 6–26 (LLLNGTFSLILIVACEAQQLP) threads the bilayer. Over 27–57 (RSHAASSSGPLCEKEAESWGNLLSSERLDAW) the chain is Cytoplasmic. Residues 58-78 (ICSLIGSFMVGLSGIFPLLVI) traverse the membrane as a helical segment. The Lumenal portion of the chain corresponds to 79 to 97 (PFETGAALRSEAGSRRLKQ). Residues 98 to 118 (LLSFAIGGLLGNVFLHLLPEA) form a helical membrane-spanning segment. Residues 119–137 (WAYTCSAAAGEGQSFQQQK) are Cytoplasmic-facing. The helical transmembrane segment at 138–158 (LLGLWVIIGFLTFLALEKIFL) threads the bilayer. The Lumenal portion of the chain corresponds to 159–225 (EKEEEECPGV…NRIKISGYLN (67 aa)). Positions 183-205 (SGYPPSKVAGKSQRAEKNSTQCN) are disordered. Residues 226–246 (LLANTIDNFTHGLAVAASFLV) form a helical membrane-spanning segment. The Cytoplasmic portion of the chain corresponds to 247 to 282 (SRKVGFLTTMAILLHEIPHEVGDFAILLRAGFDRWS). The XEXPHE-motif signature appears at 261–266 (HEIPHE). The chain crosses the membrane as a helical span at residues 283-303 (AAKMQLSTALGGIVGACFAIC). Over 304-313 (AQSPKGAGET) the chain is Lumenal. Residues 314-334 (VAWILPFTSGGFLYIALVNVV) form a helical membrane-spanning segment. Over 335 to 343 (PDLLEEKNP) the chain is Cytoplasmic. A helical transmembrane segment spans residues 344 to 364 (WNSLQQILLLCTGITVMVLLA). The Lumenal portion of the chain corresponds to 365–366 (HN).

The protein belongs to the ZIP transporter (TC 2.A.5) family. In terms of assembly, homodimer.

It localises to the golgi apparatus membrane. The protein localises to the cytoplasmic vesicle membrane. It is found in the endoplasmic reticulum membrane. The enzyme catalyses Zn(2+)(in) = Zn(2+)(out). In terms of biological role, functions as a zinc transporter transporting Zn(2+) from the Golgi apparatus to the cytosol and thus influences the zinc level at least in areas of the cytosol. This is Zinc transporter ZIP13 from Gallus gallus (Chicken).